The following is a 391-amino-acid chain: Elongation factor Tu (391 aa).

The tr-type G domain maps to Lys-10 to Glu-201. The G1 stretch occupies residues Gly-19–Thr-26. A GTP-binding site is contributed by Gly-19–Thr-26. Residue Thr-26 participates in Mg(2+) binding. The tract at residues Gly-55–Ser-59 is G2. Residues Asp-76–Gly-79 are G3. GTP is bound by residues Asp-76 to His-80 and Asn-131 to Asp-134. The tract at residues Asn-131–Asp-134 is G4. Positions Ser-169–Leu-171 are G5.

This sequence belongs to the TRAFAC class translation factor GTPase superfamily. Classic translation factor GTPase family. EF-Tu/EF-1A subfamily. As to quaternary structure, monomer.

The protein resides in the cytoplasm. The catalysed reaction is GTP + H2O = GDP + phosphate + H(+). In terms of biological role, GTP hydrolase that promotes the GTP-dependent binding of aminoacyl-tRNA to the A-site of ribosomes during protein biosynthesis. This Brucella canis (strain ATCC 23365 / NCTC 10854 / RM-666) protein is Elongation factor Tu.